The sequence spans 31 residues: Photosystem II reaction center protein M (31 aa).

The chain crosses the membrane as a helical span at residues 5-25; it reads ILALMATALFIIIPTAFLIIL.

The protein belongs to the PsbM family. In terms of assembly, PSII is composed of 1 copy each of membrane proteins PsbA, PsbB, PsbC, PsbD, PsbE, PsbF, PsbH, PsbI, PsbJ, PsbK, PsbL, PsbM, PsbT, PsbX, PsbY, PsbZ, Psb30/Ycf12, at least 3 peripheral proteins of the oxygen-evolving complex and a large number of cofactors. It forms dimeric complexes.

It localises to the plastid. It is found in the chloroplast thylakoid membrane. One of the components of the core complex of photosystem II (PSII). PSII is a light-driven water:plastoquinone oxidoreductase that uses light energy to abstract electrons from H(2)O, generating O(2) and a proton gradient subsequently used for ATP formation. It consists of a core antenna complex that captures photons, and an electron transfer chain that converts photonic excitation into a charge separation. This subunit is found at the monomer-monomer interface. In Mesostigma viride (Green alga), this protein is Photosystem II reaction center protein M.